We begin with the raw amino-acid sequence, 764 residues long: DNA polymerase 3 (764 aa).

The protein belongs to the DNA polymerase type-B family.

It catalyses the reaction DNA(n) + a 2'-deoxyribonucleoside 5'-triphosphate = DNA(n+1) + diphosphate. This is DNA polymerase 3 (dpo3) from Saccharolobus solfataricus (strain ATCC 35092 / DSM 1617 / JCM 11322 / P2) (Sulfolobus solfataricus).